A 443-amino-acid polypeptide reads, in one-letter code: Trigger factor (443 aa).

Residues 169–254 (GDIAFLDFSG…LNSIKEVQLP (86 aa)) enclose the PPIase FKBP-type domain.

It belongs to the FKBP-type PPIase family. Tig subfamily.

The protein localises to the cytoplasm. It catalyses the reaction [protein]-peptidylproline (omega=180) = [protein]-peptidylproline (omega=0). Involved in protein export. Acts as a chaperone by maintaining the newly synthesized protein in an open conformation. Functions as a peptidyl-prolyl cis-trans isomerase. This chain is Trigger factor, found in Mycoplasmoides gallisepticum (strain R(low / passage 15 / clone 2)) (Mycoplasma gallisepticum).